The following is a 522-amino-acid chain: 2-isopropylmalate synthase (522 aa).

The Pyruvate carboxyltransferase domain maps to 5 to 267 (VIIFDTTLRD…ETGINAKEIH (263 aa)). Mn(2+)-binding residues include Asp14, His202, His204, and Asn238. The regulatory domain stretch occupies residues 392 to 522 (QLQQLVVQSD…MQKNRELGGV (131 aa)).

This sequence belongs to the alpha-IPM synthase/homocitrate synthase family. LeuA type 1 subfamily. Homodimer. Mn(2+) serves as cofactor.

Its subcellular location is the cytoplasm. The enzyme catalyses 3-methyl-2-oxobutanoate + acetyl-CoA + H2O = (2S)-2-isopropylmalate + CoA + H(+). Its pathway is amino-acid biosynthesis; L-leucine biosynthesis; L-leucine from 3-methyl-2-oxobutanoate: step 1/4. In terms of biological role, catalyzes the condensation of the acetyl group of acetyl-CoA with 3-methyl-2-oxobutanoate (2-ketoisovalerate) to form 3-carboxy-3-hydroxy-4-methylpentanoate (2-isopropylmalate). The sequence is that of 2-isopropylmalate synthase from Shewanella baltica (strain OS155 / ATCC BAA-1091).